Consider the following 428-residue polypeptide: Putative F-box protein At3g22421 (428 aa).

One can recognise an F-box domain in the interval 4 to 50 (TTTISHLPTELLDEIISRVPLKSTRAVRLTCKNWDSLFKNRSFMKEE).

The sequence is that of Putative F-box protein At3g22421 from Arabidopsis thaliana (Mouse-ear cress).